Reading from the N-terminus, the 445-residue chain is tRNA-2-methylthio-N(6)-dimethylallyladenosine synthase (445 aa).

The MTTase N-terminal domain maps to 13 to 129 (KKLFIKTYGC…LPAMARAGRG (117 aa)). [4Fe-4S] cluster is bound by residues Cys22, Cys58, Cys92, Cys163, Cys167, and Cys170. The Radical SAM core domain maps to 149 to 383 (TRRAPAAFLT…LTSQQKAAQE (235 aa)). The region spanning 383–445 (EGMVGRELGV…PNSLAGVLAA (63 aa)) is the TRAM domain.

Belongs to the methylthiotransferase family. MiaB subfamily. Monomer. Requires [4Fe-4S] cluster as cofactor.

It is found in the cytoplasm. It catalyses the reaction N(6)-dimethylallyladenosine(37) in tRNA + (sulfur carrier)-SH + AH2 + 2 S-adenosyl-L-methionine = 2-methylsulfanyl-N(6)-dimethylallyladenosine(37) in tRNA + (sulfur carrier)-H + 5'-deoxyadenosine + L-methionine + A + S-adenosyl-L-homocysteine + 2 H(+). Functionally, catalyzes the methylthiolation of N6-(dimethylallyl)adenosine (i(6)A), leading to the formation of 2-methylthio-N6-(dimethylallyl)adenosine (ms(2)i(6)A) at position 37 in tRNAs that read codons beginning with uridine. The polypeptide is tRNA-2-methylthio-N(6)-dimethylallyladenosine synthase (Paracoccus denitrificans (strain Pd 1222)).